Reading from the N-terminus, the 149-residue chain is Early lymphoid activation gene protein (149 aa).

As to expression, expressed in heart, kidney, lung, and skeletal muscle, with lower levels in pancreas and liver.

Functionally, may function as an early signal that helps mediate the activation of T-cells. This Homo sapiens (Human) protein is Early lymphoid activation gene protein (DIAPH2-AS1).